The sequence spans 278 residues: MSAISIGQAVVLGAVEGVTEFLPVSSTGHLKIVEGLMGIPVDDDAVIGFSAVIQVGAIAAVLVYFSKDIMRIVSAWGRGLRDREERYHHDYRFAWWVIYATIPIVLVGLAAKPLIKGPLASLWVVAGSLIVGSGVMWWADRTGRHKRGEDDTSFKDAMLVGGSQILALLFPGFSRSGATMSTALMLDLDRVAATRLSFFLGIPALTGAGLYELKDALGTGAGAAPLAVGTLVSFVVAYASIAWLLKFVAKHTFNSFVVYRIAVGVLLFGLLGTGVLHS.

Transmembrane regions (helical) follow at residues 45–65, 95–115, 119–139, 191–211, 225–245, and 256–276; these read AVIG…LVYF, WWVI…KPLI, LASL…MWWA, VAAT…AGLY, PLAV…AWLL, and FVVY…TGVL.

Belongs to the UppP family.

The protein localises to the cell membrane. The enzyme catalyses di-trans,octa-cis-undecaprenyl diphosphate + H2O = di-trans,octa-cis-undecaprenyl phosphate + phosphate + H(+). Catalyzes the dephosphorylation of undecaprenyl diphosphate (UPP). Confers resistance to bacitracin. The sequence is that of Undecaprenyl-diphosphatase 1 from Streptomyces coelicolor (strain ATCC BAA-471 / A3(2) / M145).